The chain runs to 138 residues: Centromere protein S (138 aa).

Met1 carries the N-acetylmethionine modification. The tract at residues 110 to 138 (RKAQKKKKSEDGSKNSRQPAEAGVVESEN) is disordered.

Belongs to the TAF9 family. CENP-S/MHF1 subfamily. Heterodimer with CENPX, sometimes called MHF; this interaction stabilizes both partners. MHF heterodimers can assemble to form tetrameric structures. MHF also coassemble with CENPT-CENPW heterodimers at centromeres to form the tetrameric CENP-T-W-S-X complex. Forms a discrete complex with FANCM and CENPX, called FANCM-MHF; this interaction, probably mediated by direct binding between CENPS and FANCM, leads to synergistic activation of double-stranded DNA binding and strongly stimulates FANCM-mediated DNA remodeling. Recruited by FANCM to the Fanconi anemia (FA) core complex, which consists of CENPS, CENPX, FANCA, FANCB, FANCC, FANCE, FANCF, FANCG, FANCL, FANCM, FAAP24 and FAAP100. The FA core complex associates with Bloom syndrome (BLM) complex, which consists of at least BLM, DNA topoisomerase 3-alpha (TOP3A), RMI1/BLAP75, RPA1/RPA70 and RPA2/RPA32. The super complex between FA and BLM is called BRAFT. Component of the CENPA-CAD complex, composed of CENPI, CENPK, CENPL, CENPO, CENPP, CENPQ, CENPR and CENPS. The CENPA-CAD complex is probably recruited on centromeres by the CENPA-NAC complex, composed of at least CENPA, CENPC, CENPH, CENPM, CENPN, CENPT and CENPU. Ubiquitously expressed.

It is found in the nucleus. It localises to the chromosome. The protein resides in the centromere. The protein localises to the kinetochore. In terms of biological role, DNA-binding component of the Fanconi anemia (FA) core complex. Required for the normal activation of the FA pathway, leading to monoubiquitination of the FANCI-FANCD2 complex in response to DNA damage, cellular resistance to DNA cross-linking drugs, and prevention of chromosomal breakage. In complex with CENPX (MHF heterodimer), crucial cofactor for FANCM in both binding and ATP-dependent remodeling of DNA. Stabilizes FANCM. In complex with CENPX and FANCM (but not other FANC proteins), rapidly recruited to blocked forks and promotes gene conversion at blocked replication forks. In complex with CENPT, CENPW and CENPX (CENP-T-W-S-X heterotetramer), involved in the formation of a functional kinetochore outer plate, which is essential for kinetochore-microtubule attachment and faithful mitotic progression. As a component of MHF and CENP-T-W-S-X complexes, binds DNA and bends it to form a nucleosome-like structure. DNA-binding function is fulfilled in the presence of CENPX, with the following preference for DNA substates: Holliday junction &gt; double-stranded &gt; splay arm &gt; single-stranded. Does not bind DNA on its own. This Homo sapiens (Human) protein is Centromere protein S (CENPS).